The chain runs to 428 residues: Adenylosuccinate synthetase (428 aa).

GTP is bound by residues 12–18 and 40–42; these read GDEGKGK and GHT. Asp13 acts as the Proton acceptor in catalysis. Asp13 and Gly40 together coordinate Mg(2+). IMP-binding positions include 13–16, 38–41, Thr128, Arg142, Gln222, Thr237, and Arg301; these read DEGK and NAGH. His41 serves as the catalytic Proton donor. 297-303 is a substrate binding site; sequence VNTGRAR. GTP-binding positions include Arg303, 329–331, and 411–413; these read KLD and STS.

This sequence belongs to the adenylosuccinate synthetase family. Homodimer. Mg(2+) serves as cofactor.

The protein localises to the cytoplasm. The enzyme catalyses IMP + L-aspartate + GTP = N(6)-(1,2-dicarboxyethyl)-AMP + GDP + phosphate + 2 H(+). The protein operates within purine metabolism; AMP biosynthesis via de novo pathway; AMP from IMP: step 1/2. In terms of biological role, plays an important role in the de novo pathway of purine nucleotide biosynthesis. Catalyzes the first committed step in the biosynthesis of AMP from IMP. This is Adenylosuccinate synthetase from Caulobacter vibrioides (strain ATCC 19089 / CIP 103742 / CB 15) (Caulobacter crescentus).